The sequence spans 222 residues: UPF0173 metal-dependent hydrolase Kcr_0055 (222 aa).

It belongs to the UPF0173 family.

This is UPF0173 metal-dependent hydrolase Kcr_0055 from Korarchaeum cryptofilum (strain OPF8).